Reading from the N-terminus, the 272-residue chain is S-adenosylmethionine decarboxylase proenzyme (272 aa).

The active-site Schiff-base intermediate with substrate; via pyruvic acid is serine 122. Position 122 is a pyruvic acid (Ser); by autocatalysis (serine 122). Catalysis depends on histidine 127, which acts as the Proton acceptor; for processing activity. Catalysis depends on cysteine 150, which acts as the Proton donor; for catalytic activity.

It belongs to the prokaryotic AdoMetDC family. Type 2 subfamily. In terms of assembly, heterooctamer of four alpha and four beta chains arranged as a tetramer of alpha/beta heterodimers. Pyruvate serves as cofactor. In terms of processing, is synthesized initially as an inactive proenzyme. Formation of the active enzyme involves a self-maturation process in which the active site pyruvoyl group is generated from an internal serine residue via an autocatalytic post-translational modification. Two non-identical subunits are generated from the proenzyme in this reaction, and the pyruvate is formed at the N-terminus of the alpha chain, which is derived from the carboxyl end of the proenzyme. The post-translation cleavage follows an unusual pathway, termed non-hydrolytic serinolysis, in which the side chain hydroxyl group of the serine supplies its oxygen atom to form the C-terminus of the beta chain, while the remainder of the serine residue undergoes an oxidative deamination to produce ammonia and the pyruvoyl group blocking the N-terminus of the alpha chain.

The catalysed reaction is S-adenosyl-L-methionine + H(+) = S-adenosyl 3-(methylsulfanyl)propylamine + CO2. The protein operates within amine and polyamine biosynthesis; S-adenosylmethioninamine biosynthesis; S-adenosylmethioninamine from S-adenosyl-L-methionine: step 1/1. Its function is as follows. Catalyzes the decarboxylation of S-adenosylmethionine to S-adenosylmethioninamine (dcAdoMet), the propylamine donor required for the synthesis of the polyamines spermine and spermidine from the diamine putrescine. The sequence is that of S-adenosylmethionine decarboxylase proenzyme from Clostridium botulinum (strain Alaska E43 / Type E3).